The following is a 254-amino-acid chain: Ribonuclease HII (254 aa).

The RNase H type-2 domain maps to 70-254; it reads TCIAGIDEAG…SFAPVKSVIS (185 aa). The a divalent metal cation site is built by D76, E77, and D168.

This sequence belongs to the RNase HII family. Mn(2+) is required as a cofactor. Requires Mg(2+) as cofactor.

The protein localises to the cytoplasm. The catalysed reaction is Endonucleolytic cleavage to 5'-phosphomonoester.. Functionally, endonuclease that specifically degrades the RNA of RNA-DNA hybrids. This Bacillus pumilus (strain SAFR-032) protein is Ribonuclease HII.